Consider the following 321-residue polypeptide: Transaldolase (321 aa).

K132 serves as the catalytic Schiff-base intermediate with substrate.

It belongs to the transaldolase family. Type 1 subfamily. Homodimer.

It localises to the cytoplasm. It catalyses the reaction D-sedoheptulose 7-phosphate + D-glyceraldehyde 3-phosphate = D-erythrose 4-phosphate + beta-D-fructose 6-phosphate. It functions in the pathway carbohydrate degradation; pentose phosphate pathway; D-glyceraldehyde 3-phosphate and beta-D-fructose 6-phosphate from D-ribose 5-phosphate and D-xylulose 5-phosphate (non-oxidative stage): step 2/3. Its function is as follows. Transaldolase is important for the balance of metabolites in the pentose-phosphate pathway. The sequence is that of Transaldolase from Rhizobium rhizogenes (strain K84 / ATCC BAA-868) (Agrobacterium radiobacter).